The primary structure comprises 297 residues: F-actin-capping protein subunit beta (297 aa).

The span at 276–289 (DLSGKESDDKRQSE) shows a compositional bias: basic and acidic residues. Residues 276-297 (DLSGKESDDKRQSELVKGLQSL) are disordered.

Belongs to the F-actin-capping protein beta subunit family. Component of the F-actin capping complex, composed of a heterodimer of an alpha and a beta subunit.

It localises to the cytoplasm. Its subcellular location is the cytoskeleton. The protein resides in the actin patch. In terms of biological role, F-actin-capping proteins bind in a Ca(2+)-independent manner to the fast growing ends of actin filaments (barbed end) thereby blocking the exchange of subunits at these ends. Unlike other capping proteins (such as gelsolin and severin), these proteins do not sever actin filaments. This Debaryomyces hansenii (strain ATCC 36239 / CBS 767 / BCRC 21394 / JCM 1990 / NBRC 0083 / IGC 2968) (Yeast) protein is F-actin-capping protein subunit beta (CAP2).